The chain runs to 428 residues: Enolase (428 aa).

Q163 contributes to the (2R)-2-phosphoglycerate binding site. E205 (proton donor) is an active-site residue. D242, E285, and D312 together coordinate Mg(2+). (2R)-2-phosphoglycerate-binding residues include K337, R366, S367, and K388. K337 acts as the Proton acceptor in catalysis.

It belongs to the enolase family. Requires Mg(2+) as cofactor.

The protein localises to the cytoplasm. Its subcellular location is the secreted. The protein resides in the cell surface. It carries out the reaction (2R)-2-phosphoglycerate = phosphoenolpyruvate + H2O. The protein operates within carbohydrate degradation; glycolysis; pyruvate from D-glyceraldehyde 3-phosphate: step 4/5. Functionally, catalyzes the reversible conversion of 2-phosphoglycerate (2-PG) into phosphoenolpyruvate (PEP). It is essential for the degradation of carbohydrates via glycolysis. The chain is Enolase from Brevibacillus brevis (strain 47 / JCM 6285 / NBRC 100599).